We begin with the raw amino-acid sequence, 352 residues long: Glycerol-1-phosphate dehydrogenase [NAD(P)+] (352 aa).

Residues 99-103 (GKSID) and 121-124 (TVAS) each bind NAD(+). Residue Asp126 coordinates substrate. NAD(+) is bound at residue Ser130. Asp173 lines the substrate pocket. The Zn(2+) site is built by Asp173 and His253. Residue His257 participates in substrate binding. His269 provides a ligand contact to Zn(2+).

Belongs to the glycerol-1-phosphate dehydrogenase family. As to quaternary structure, homodimer. The cofactor is Zn(2+).

It is found in the cytoplasm. It catalyses the reaction sn-glycerol 1-phosphate + NAD(+) = dihydroxyacetone phosphate + NADH + H(+). It carries out the reaction sn-glycerol 1-phosphate + NADP(+) = dihydroxyacetone phosphate + NADPH + H(+). Its pathway is membrane lipid metabolism; glycerophospholipid metabolism. Totally inhibited by EDTA in vitro. In terms of biological role, catalyzes the NAD(P)H-dependent reduction of dihydroxyacetonephosphate (DHAP or glycerone phosphate) to glycerol 1-phosphate (G1P). The G1P thus generated is used as the glycerophosphate backbone of phospholipids in the cellular membranes of Archaea. Is also able to catalyze the reverse reaction, i.e. the NAD(+)-dependent oxidation of G1P but not of G3P. Is not active toward glycerol, dihydroxyacetone, glyceraldehyde phosphate, and glycerol-2-phosphate. This is Glycerol-1-phosphate dehydrogenase [NAD(P)+] (egsA) from Aeropyrum pernix (strain ATCC 700893 / DSM 11879 / JCM 9820 / NBRC 100138 / K1).